A 239-amino-acid polypeptide reads, in one-letter code: SKA complex subunit 1 (239 aa).

The tract at residues 87 to 115 is disordered; that stretch reads PDSVPQKSTRPCLDDEKEGSSVVQPPESG. The interval 116–239 is microtubule binding; it reads NRHVQLISEQ…RCGPLTFYYA (124 aa).

Belongs to the SKA1 family. In terms of assembly, component of the SKA complex, composed of two copies of ska-1 and a single copy of ska-3. The core complex associates with microtubules and may form dimeric assemblies. Interacts with ska-3 and microtubules.

The protein localises to the cytoplasm. Its subcellular location is the cytoskeleton. It localises to the spindle. It is found in the chromosome. The protein resides in the centromere. The protein localises to the kinetochore. In terms of biological role, component of the SKA complex, a microtubule plus end-binding complex of the outer kinetochore that stabilizes spindle microtubule-kinetochore attachments, promotes alignment of chromosomes at the mitotic spindle equator (chromosome congression) and assists suppression of the spindle assembly checkpoint. Kinetochores, consisting of a centromere-associated inner segment and a microtubule-contacting outer segment, play a crucial role in chromosome segregation by mediating the physical connection between centromeric DNA and spindle microtubules. The outer kinetochore is made up of the ten-subunit KMN network complex, comprising the MIS12, NDC80 and KNL1 complexes, and auxiliary microtubule-associated components such as the SKA complex; together they connect the outer kinetochore with the inner kinetochore, bind microtubules, and mediate interactions with mitotic checkpoint proteins that delay anaphase until chromosomes are bioriented on the spindle. The SKA complex is loaded onto bioriented kinetochores and it facilitates chromosome congression by stabilizing microtubules and end-on attachment of the NDC80 complex to depolymerizing spindle microtubules, thereby assisting the poleward-moving kinetochore in withstanding microtubule pulling forces. The complex associates with dynamic microtubule plus-ends and can track both depolymerizing and elongating microtubules. The complex recruits protein phosphatase 1 (PP1) to the kinetochore in prometaphase and metaphase, to oppose spindle assembly checkpoint signaling and promote the onset of anaphase. In the complex, it mediates interactions with microtubules. During meiosis the SKA complex stabilizes the meiotic spindle and is required for its migration to the cortex. This chain is SKA complex subunit 1, found in Caenorhabditis briggsae.